We begin with the raw amino-acid sequence, 183 residues long: NADH-quinone oxidoreductase subunit I (183 aa).

4Fe-4S ferredoxin-type domains are found at residues 71 to 100 (KRDE…MKAA) and 117 to 146 (EIYE…LTTS). Residues cysteine 80, cysteine 83, cysteine 86, cysteine 90, cysteine 126, cysteine 129, cysteine 132, and cysteine 136 each contribute to the [4Fe-4S] cluster site.

It belongs to the complex I 23 kDa subunit family. As to quaternary structure, NDH-1 is composed of 14 different subunits. Subunits NuoA, H, J, K, L, M, N constitute the membrane sector of the complex. It depends on [4Fe-4S] cluster as a cofactor.

Its subcellular location is the cell inner membrane. The catalysed reaction is a quinone + NADH + 5 H(+)(in) = a quinol + NAD(+) + 4 H(+)(out). Functionally, NDH-1 shuttles electrons from NADH, via FMN and iron-sulfur (Fe-S) centers, to quinones in the respiratory chain. The immediate electron acceptor for the enzyme in this species is believed to be ubiquinone. Couples the redox reaction to proton translocation (for every two electrons transferred, four hydrogen ions are translocated across the cytoplasmic membrane), and thus conserves the redox energy in a proton gradient. This is NADH-quinone oxidoreductase subunit I from Flavobacterium psychrophilum (strain ATCC 49511 / DSM 21280 / CIP 103535 / JIP02/86).